Reading from the N-terminus, the 366-residue chain is Chorismate synthase (366 aa).

Residues arginine 48 and arginine 54 each contribute to the NADP(+) site. Residues 125–127 (RSS), 237–238 (NA), glycine 277, 292–296 (KPTSS), and arginine 318 contribute to the FMN site.

Belongs to the chorismate synthase family. As to quaternary structure, homotetramer. Requires FMNH2 as cofactor.

It carries out the reaction 5-O-(1-carboxyvinyl)-3-phosphoshikimate = chorismate + phosphate. Its pathway is metabolic intermediate biosynthesis; chorismate biosynthesis; chorismate from D-erythrose 4-phosphate and phosphoenolpyruvate: step 7/7. Its function is as follows. Catalyzes the anti-1,4-elimination of the C-3 phosphate and the C-6 proR hydrogen from 5-enolpyruvylshikimate-3-phosphate (EPSP) to yield chorismate, which is the branch point compound that serves as the starting substrate for the three terminal pathways of aromatic amino acid biosynthesis. This reaction introduces a second double bond into the aromatic ring system. This chain is Chorismate synthase, found in Acidovorax sp. (strain JS42).